Reading from the N-terminus, the 900-residue chain is MKASEEEYRLNFFIKNDFKRKICKSCKTPFWTRDEKKEYCSDIPCTDYYFFDINIKSQPLTVKEAREKFLSFFEKRGHTRISPKPVLARWREDLYLTIASIVDFQPHVTSGLVPPPANPLVVSQPSIRLEDIDNVGITFGRHLTTFEMAAHHAFNYPDHYVYWKEETTAYATEFFTKELGIPEEELNFKESWWEGGGNAGPCLEVTVGGLELATLVFMQYKITDNGNYTPLKLKIVDTGYGVERIAWITQKTPSAFHAIYGNLVYKFFNKIGVAYIDETLLKVASRFAGKIDPDNPDTIKIHRQMVSKELGIDIKAVEEELDRAAKVFQILDHTKTIMLMLADGLVPSNSGEGYLGRLVIRRALKVLRLLKSDVRLYELVKEQIDFWKEDFPQVLKNKDYILDAVELEQQRFEKILEKVPSIASTLARKSEITTEDLIQVYDSNGIPPDLLEEELKKKSVKFELPRNFYALVAKRHQTSTIKSAYDKVKLPKDMLEYITALQPTEKLYYKDQYMRSFEGKVLGVYKNYLILDKTTFYPEGGGQLGDTGLIIDEKSSKRYEVIDTQKVNDVIVHILKEEPSTIKVGDNVRGEINWERRYRLMRHHTVTHVILAAAKKVLGEHVWQAGAEKTPEKGRLDITHHKTLTEEEVKLIENYANSVISDRRQVKPLEMNRMEAEMKYGVSIYEGGVPNSATIRLLEIKDWDIESCGGTHVSNTSEIGAVKIINVERIQDGVIRLEYVAGPALVDYIRETQAKIVEASKIIGTSPDQLTSRLRRILNEIEEKNNLIIQYRRIIETELLNNLKPYEINGNKIYIIEGLGDEEENKEILRKLTSTDNTIAISISDNRLQIATSKNMRVDKIVEELLKGGGKGGGKGTFANVILNSKKSKEEIIEIVRKSL.

Zn(2+) contacts are provided by His604, His608, Cys708, and His712.

It belongs to the class-II aminoacyl-tRNA synthetase family. Zn(2+) serves as cofactor.

Its subcellular location is the cytoplasm. The catalysed reaction is tRNA(Ala) + L-alanine + ATP = L-alanyl-tRNA(Ala) + AMP + diphosphate. Functionally, catalyzes the attachment of alanine to tRNA(Ala) in a two-step reaction: alanine is first activated by ATP to form Ala-AMP and then transferred to the acceptor end of tRNA(Ala). Also edits incorrectly charged Ser-tRNA(Ala) and Gly-tRNA(Ala) via its editing domain. In Saccharolobus islandicus (strain L.S.2.15 / Lassen #1) (Sulfolobus islandicus), this protein is Alanine--tRNA ligase.